The primary structure comprises 344 residues: UDP-3-O-acylglucosamine N-acyltransferase (344 aa).

The active-site Proton acceptor is His236.

The protein belongs to the transferase hexapeptide repeat family. LpxD subfamily. As to quaternary structure, homotrimer.

The catalysed reaction is a UDP-3-O-[(3R)-3-hydroxyacyl]-alpha-D-glucosamine + a (3R)-hydroxyacyl-[ACP] = a UDP-2-N,3-O-bis[(3R)-3-hydroxyacyl]-alpha-D-glucosamine + holo-[ACP] + H(+). It participates in bacterial outer membrane biogenesis; LPS lipid A biosynthesis. In terms of biological role, catalyzes the N-acylation of UDP-3-O-acylglucosamine using 3-hydroxyacyl-ACP as the acyl donor. Is involved in the biosynthesis of lipid A, a phosphorylated glycolipid that anchors the lipopolysaccharide to the outer membrane of the cell. The polypeptide is UDP-3-O-acylglucosamine N-acyltransferase (Nitratidesulfovibrio vulgaris (strain ATCC 29579 / DSM 644 / CCUG 34227 / NCIMB 8303 / VKM B-1760 / Hildenborough) (Desulfovibrio vulgaris)).